Reading from the N-terminus, the 136-residue chain is MRTLWIVAVLLVGEGSLIQLWEMIFQEMGKGAAKKYGLYGCNCGMGHRGRPVDATDRCCSVHKCCYKKLTDCDPKTDRYSYSWENGAIVCGGDDPCRKEVCECDKATTICFRDNLDTYDKKYKIYLKFLCKKPEPC.

Residues 1 to 15 (MRTLWIVAVLLVGEG) form the signal peptide. 7 cysteine pairs are disulfide-bonded: Cys-41–Cys-130, Cys-43–Cys-59, Cys-58–Cys-110, Cys-64–Cys-136, Cys-65–Cys-103, Cys-72–Cys-96, and Cys-90–Cys-101. Residue His-62 is part of the active site. Residue Asp-104 is part of the active site.

Belongs to the phospholipase A2 family. Group II subfamily. K49 sub-subfamily. As to expression, expressed by the venom gland.

The protein localises to the secreted. It catalyses the reaction a 1,2-diacyl-sn-glycero-3-phosphocholine + H2O = a 1-acyl-sn-glycero-3-phosphocholine + a fatty acid + H(+). In terms of biological role, PLA2 catalyzes the calcium-dependent hydrolysis of the 2-acyl groups in 3-sn-phosphoglycerides. In Trimeresurus gracilis (Kikuchi habu), this protein is Basic phospholipase A2 Tgc-K49.